The primary structure comprises 308 residues: Zinc finger CCCH domain-containing protein 15 (308 aa).

The tract at residues 1-21 is disordered; that stretch reads MENKIAPFSYSGSSAGNSSSG. The segment covering 9–21 has biased composition (low complexity); the sequence is SYSGSSAGNSSSG. Positions 56–91 form a coiled coil; that stretch reads TRLHEASLEAEALRLENTELRSMNLRLKNELNSLIR. Positions 110-190 are disordered; that stretch reads LSIGGNDADE…GTVTKPGTCG (81 aa). Ser-111 is subject to Phosphoserine. Residues 148-164 are compositionally biased toward polar residues; the sequence is RSSLPKSISVRSNGYSK. 2 consecutive C3H1-type zinc fingers follow at residues 222–250 and 260–288; these read MTKT…HGIK and RYKT…HSLS.

Post-translationally, phosphorylated at Ser-111 by ASK7/BIN2 in the cytoplasm in the absence of brassinosteroids (BRs). Highly expressed in secondary cell wall-forming tissues and the xylem cells of roots. Expressed predominantly in inflorescence stems, flowers and siliques. Highly expressed in the basal portion of stems, where cells are undergoing secondary cell wall thickening. Highly expressed in meiocytes and tapetum from anthers.

Its subcellular location is the cytoplasm. It localises to the nucleus. Functions probably as a transcriptional factor that activates genes involved in secondary cell wall biosynthesis. Functions redudantly with C3H14 to regulate secondary cell wall formation. C3H14 and C3H15 have overlapping roles in the regulation of secondary cell wall formation and anther development. C3H14 may contribute more to secondary cell wall thickening while C3H15 could be more important in anther development. May regulate at both the transcriptional and post-transcriptional levels the expression of many genes involved in various biological processes, particularly those associated with cell wall metabolism and pollen development. Involved in the regulation of callose metabolism in male meiocytes, in integrity of newly formed microspores, and promotes male fertility. May be involved in the regulation of the callose synthesis genes CALS5 and CALS12, the potential degradation of callose walls-related genes A6 and MYB80, as well as other putative beta-1,3-glucanase genes. Negatively regulates cell elongation by inhibiting brassinosteroid (BR) signaling. Functions downstream of the BRI1 receptor as a negative regulator in the BR pathway. The chain is Zinc finger CCCH domain-containing protein 15 from Arabidopsis thaliana (Mouse-ear cress).